The sequence spans 294 residues: N-acetylmuramic acid 6-phosphate etherase (294 aa).

The region spanning V54–K217 is the SIS domain. The active-site Proton donor is E82. Residue E113 is part of the active site.

This sequence belongs to the GCKR-like family. MurNAc-6-P etherase subfamily. In terms of assembly, homodimer.

It carries out the reaction N-acetyl-D-muramate 6-phosphate + H2O = N-acetyl-D-glucosamine 6-phosphate + (R)-lactate. It functions in the pathway amino-sugar metabolism; N-acetylmuramate degradation. Its function is as follows. Specifically catalyzes the cleavage of the D-lactyl ether substituent of MurNAc 6-phosphate, producing GlcNAc 6-phosphate and D-lactate. The sequence is that of N-acetylmuramic acid 6-phosphate etherase from Bacillus cereus (strain 03BB102).